The following is a 400-amino-acid chain: Chalcone synthase C2 (400 aa).

The active site involves cysteine 168.

The protein belongs to the thiolase-like superfamily. Chalcone/stilbene synthases family.

It carries out the reaction (E)-4-coumaroyl-CoA + 3 malonyl-CoA + 3 H(+) = 2',4,4',6'-tetrahydroxychalcone + 3 CO2 + 4 CoA. It functions in the pathway secondary metabolite biosynthesis; flavonoid biosynthesis. Functionally, the primary product of this enzyme is 4,2',4',6'-tetrahydroxychalcone (also termed naringenin-chalcone or chalcone) which can under specific conditions spontaneously isomerize into naringenin. The protein is Chalcone synthase C2 (C2) of Zea mays (Maize).